A 34-amino-acid polypeptide reads, in one-letter code: Protamine-Y1/Y2 (34 aa).

The segment at 1-34 is disordered; the sequence is PRRRRQASRPVRRRRRYRRSTAARRRRRVVRRRR.

Testis.

The protein localises to the nucleus. The protein resides in the chromosome. In terms of biological role, protamines substitute for histones in the chromatin of sperm during the haploid phase of spermatogenesis. They compact sperm DNA into a highly condensed, stable and inactive complex. The polypeptide is Protamine-Y1/Y2 (Thunnus thynnus (Atlantic bluefin tuna)).